The following is a 389-amino-acid chain: UDP-N-acetylglucosamine--N-acetylmuramyl-(pentapeptide) pyrophosphoryl-undecaprenol N-acetylglucosamine transferase (389 aa).

UDP-N-acetyl-alpha-D-glucosamine-binding positions include 39 to 41, asparagine 157, arginine 193, serine 221, isoleucine 275, 294 to 299, and glutamine 320; these read TGG and ALTVSE.

It belongs to the glycosyltransferase 28 family. MurG subfamily.

Its subcellular location is the cell inner membrane. The catalysed reaction is di-trans,octa-cis-undecaprenyl diphospho-N-acetyl-alpha-D-muramoyl-L-alanyl-D-glutamyl-meso-2,6-diaminopimeloyl-D-alanyl-D-alanine + UDP-N-acetyl-alpha-D-glucosamine = di-trans,octa-cis-undecaprenyl diphospho-[N-acetyl-alpha-D-glucosaminyl-(1-&gt;4)]-N-acetyl-alpha-D-muramoyl-L-alanyl-D-glutamyl-meso-2,6-diaminopimeloyl-D-alanyl-D-alanine + UDP + H(+). It participates in cell wall biogenesis; peptidoglycan biosynthesis. Functionally, cell wall formation. Catalyzes the transfer of a GlcNAc subunit on undecaprenyl-pyrophosphoryl-MurNAc-pentapeptide (lipid intermediate I) to form undecaprenyl-pyrophosphoryl-MurNAc-(pentapeptide)GlcNAc (lipid intermediate II). In Saccharophagus degradans (strain 2-40 / ATCC 43961 / DSM 17024), this protein is UDP-N-acetylglucosamine--N-acetylmuramyl-(pentapeptide) pyrophosphoryl-undecaprenol N-acetylglucosamine transferase.